Reading from the N-terminus, the 510-residue chain is Inositol-3-phosphate synthase (510 aa).

Residues glycine 70, glycine 71, asparagine 72, asparagine 73, aspartate 143, isoleucine 180, glutamine 190, arginine 193, threonine 230, alanine 231, asparagine 232, threonine 233, glycine 281, serine 282, aspartate 306, serine 309, asparagine 340, asparagine 341, aspartate 342, lysine 355, glycine 393, aspartate 394, aspartate 422, and serine 423 each coordinate NAD(+).

The protein belongs to the myo-inositol 1-phosphate synthase family. NAD(+) serves as cofactor.

It localises to the cytoplasm. The protein resides in the cytosol. It is found in the nucleus. The enzyme catalyses D-glucose 6-phosphate = 1D-myo-inositol 3-phosphate. Its pathway is polyol metabolism; myo-inositol biosynthesis; myo-inositol from D-glucose 6-phosphate: step 1/2. In terms of biological role, key enzyme in myo-inositol biosynthesis pathway that catalyzes the conversion of glucose 6-phosphate to 1-myo-inositol 1-phosphate in a NAD-dependent manner. The polypeptide is Inositol-3-phosphate synthase (Sesamum indicum (Oriental sesame)).